Reading from the N-terminus, the 428-residue chain is Small ribosomal subunit protein uS2m (428 aa).

Residues 30-50 (FLSQDNFTAPPPPPTNSKKQA) are disordered.

Belongs to the universal ribosomal protein uS2 family. As to quaternary structure, component of the mitochondrial small ribosomal subunit (mt-SSU). Mature N.crassa 74S mitochondrial ribosomes consist of a small (37S) and a large (54S) subunit. The 37S small subunit contains a 16S ribosomal RNA (16S mt-rRNA) and 32 different proteins. The 54S large subunit contains a 23S rRNA (23S mt-rRNA) and 42 different proteins.

The protein localises to the mitochondrion. Component of the mitochondrial ribosome (mitoribosome), a dedicated translation machinery responsible for the synthesis of mitochondrial genome-encoded proteins, including at least some of the essential transmembrane subunits of the mitochondrial respiratory chain. The mitoribosomes are attached to the mitochondrial inner membrane and translation products are cotranslationally integrated into the membrane. This is Small ribosomal subunit protein uS2m (mrp4) from Neurospora crassa (strain ATCC 24698 / 74-OR23-1A / CBS 708.71 / DSM 1257 / FGSC 987).